Here is a 561-residue protein sequence, read N- to C-terminus: NADH-quinone oxidoreductase subunit C/D (561 aa).

Positions 1-152 are NADH dehydrogenase I subunit C; the sequence is MLEKFSSKFN…YQVLYESDDL (152 aa). The NADH dehydrogenase I subunit D stretch occupies residues 176–561; sequence KYTFLNIGPS…LNIIAGELDR (386 aa).

It in the N-terminal section; belongs to the complex I 30 kDa subunit family. This sequence in the C-terminal section; belongs to the complex I 49 kDa subunit family. As to quaternary structure, NDH-1 is composed of 13 different subunits. Subunits NuoB, CD, E, F, and G constitute the peripheral sector of the complex.

The protein localises to the cell inner membrane. It catalyses the reaction a quinone + NADH + 5 H(+)(in) = a quinol + NAD(+) + 4 H(+)(out). NDH-1 shuttles electrons from NADH, via FMN and iron-sulfur (Fe-S) centers, to quinones in the respiratory chain. The immediate electron acceptor for the enzyme in this species is believed to be ubiquinone. Couples the redox reaction to proton translocation (for every two electrons transferred, four hydrogen ions are translocated across the cytoplasmic membrane), and thus conserves the redox energy in a proton gradient. The sequence is that of NADH-quinone oxidoreductase subunit C/D from Campylobacter fetus subsp. fetus (strain 82-40).